A 144-amino-acid chain; its full sequence is Large ribosomal subunit protein uL13 (144 aa).

Belongs to the universal ribosomal protein uL13 family. Part of the 50S ribosomal subunit.

Its function is as follows. This protein is one of the early assembly proteins of the 50S ribosomal subunit, although it is not seen to bind rRNA by itself. It is important during the early stages of 50S assembly. The chain is Large ribosomal subunit protein uL13 from Nitratidesulfovibrio vulgaris (strain DSM 19637 / Miyazaki F) (Desulfovibrio vulgaris).